Here is a 223-residue protein sequence, read N- to C-terminus: 7-cyano-7-deazaguanine synthase (223 aa).

Position 11–21 (11–21) interacts with ATP; sequence ISGGMDSALAA. Zn(2+) is bound by residues Cys189, Cys197, Cys200, and Cys203.

The protein belongs to the QueC family. Requires Zn(2+) as cofactor.

It carries out the reaction 7-carboxy-7-deazaguanine + NH4(+) + ATP = 7-cyano-7-deazaguanine + ADP + phosphate + H2O + H(+). Its pathway is purine metabolism; 7-cyano-7-deazaguanine biosynthesis. Its function is as follows. Catalyzes the ATP-dependent conversion of 7-carboxy-7-deazaguanine (CDG) to 7-cyano-7-deazaguanine (preQ(0)). This Campylobacter fetus subsp. fetus (strain 82-40) protein is 7-cyano-7-deazaguanine synthase.